Reading from the N-terminus, the 595-residue chain is Aspartate--tRNA(Asp/Asn) ligase (595 aa).

Glutamate 175 contacts L-aspartate. Residues 199-202 (QQFK) are aspartate. The L-aspartate site is built by arginine 221 and histidine 451. 221–223 (RDE) contributes to the ATP binding site. Glutamate 485 serves as a coordination point for ATP. Residue arginine 492 participates in L-aspartate binding. 537–540 (GVDR) is an ATP binding site.

Belongs to the class-II aminoacyl-tRNA synthetase family. Type 1 subfamily. In terms of assembly, homodimer.

The protein localises to the cytoplasm. It catalyses the reaction tRNA(Asx) + L-aspartate + ATP = L-aspartyl-tRNA(Asx) + AMP + diphosphate. Functionally, aspartyl-tRNA synthetase with relaxed tRNA specificity since it is able to aspartylate not only its cognate tRNA(Asp) but also tRNA(Asn). Reaction proceeds in two steps: L-aspartate is first activated by ATP to form Asp-AMP and then transferred to the acceptor end of tRNA(Asp/Asn). The polypeptide is Aspartate--tRNA(Asp/Asn) ligase (Acidiphilium cryptum (strain JF-5)).